Here is a 122-residue protein sequence, read N- to C-terminus: Large ribosomal subunit protein uL14 (122 aa).

The protein belongs to the universal ribosomal protein uL14 family. In terms of assembly, part of the 50S ribosomal subunit. Forms a cluster with proteins L3 and L19. In the 70S ribosome, L14 and L19 interact and together make contacts with the 16S rRNA in bridges B5 and B8.

Binds to 23S rRNA. Forms part of two intersubunit bridges in the 70S ribosome. The protein is Large ribosomal subunit protein uL14 of Shewanella sediminis (strain HAW-EB3).